The primary structure comprises 306 residues: D-alanine--D-alanine ligase (306 aa).

An ATP-grasp domain is found at 104-303; the sequence is KMLWKAFGLP…FEQLVVKILE (200 aa). 134–189 provides a ligand contact to ATP; that stretch reads VAKLGLPLMVKPSLEGSSVGLTKVKAVEELKSAVEYALKFDNTILIEEWLAGDELT. The Mg(2+) site is built by Asp257, Glu270, and Asn272.

Belongs to the D-alanine--D-alanine ligase family. Mg(2+) serves as cofactor. It depends on Mn(2+) as a cofactor.

The protein localises to the cytoplasm. It catalyses the reaction 2 D-alanine + ATP = D-alanyl-D-alanine + ADP + phosphate + H(+). The protein operates within cell wall biogenesis; peptidoglycan biosynthesis. Cell wall formation. The chain is D-alanine--D-alanine ligase from Haemophilus influenzae (strain 86-028NP).